The chain runs to 80 residues: ATP synthase subunit c (80 aa).

A run of 2 helical transmembrane segments spans residues 11 to 31 (IAAA…IGIL) and 53 to 73 (FFIV…LGLY).

This sequence belongs to the ATPase C chain family. F-type ATPases have 2 components, F(1) - the catalytic core - and F(0) - the membrane proton channel. F(1) has five subunits: alpha(3), beta(3), gamma(1), delta(1), epsilon(1). F(0) has three main subunits: a(1), b(2) and c(10-14). The alpha and beta chains form an alternating ring which encloses part of the gamma chain. F(1) is attached to F(0) by a central stalk formed by the gamma and epsilon chains, while a peripheral stalk is formed by the delta and b chains.

The protein localises to the cell inner membrane. Its function is as follows. F(1)F(0) ATP synthase produces ATP from ADP in the presence of a proton or sodium gradient. F-type ATPases consist of two structural domains, F(1) containing the extramembraneous catalytic core and F(0) containing the membrane proton channel, linked together by a central stalk and a peripheral stalk. During catalysis, ATP synthesis in the catalytic domain of F(1) is coupled via a rotary mechanism of the central stalk subunits to proton translocation. Functionally, key component of the F(0) channel; it plays a direct role in translocation across the membrane. A homomeric c-ring of between 10-14 subunits forms the central stalk rotor element with the F(1) delta and epsilon subunits. This is ATP synthase subunit c from Aeromonas hydrophila subsp. hydrophila (strain ATCC 7966 / DSM 30187 / BCRC 13018 / CCUG 14551 / JCM 1027 / KCTC 2358 / NCIMB 9240 / NCTC 8049).